Consider the following 267-residue polypeptide: Actin maturation protease (267 aa).

The segment at Met1–Gly32 is disordered. The span at Ala8–Ile17 shows a compositional bias: pro residues. The tract at residues Ser74–Asp188 is peptidase C39-like. The active site involves Cys82.

It belongs to the ACTMAP family.

The catalysed reaction is N-terminal N(alpha)-acetyl-L-cysteinyl-L-aspartyl-[protein] + H2O = N-terminal L-aspartyl-[protein] + N-acetyl-L-cysteine. Its function is as follows. Actin maturation protease that specifically mediates the cleavage of immature acetylated N-terminal actin, thereby contributing to actin maturation. In Drosophila melanogaster (Fruit fly), this protein is Actin maturation protease.